Reading from the N-terminus, the 377-residue chain is MAAHGGGGVEEDQAGSSSLCPPAAEAEAAAAAAAIARAARPPRPGRDKRLGVRHPLKHRRFRAGGKAAVAAGAREVGEATTVAEATATGPPKGSDEDDEARYICGGWTSDDGRMSCGYSSFRGRRANMEDFYDIKSSKVDDNQINLFGIFDGHGGSHAAEHLKKHLFENLLKHPSFITDTKSAISETYRKTDSDFLDAETNINREDGSTASTAIFVGNHIYVANVGDSRTVMSKAGKAIALSSDHKPNRKDERKRIENAGGVVTWSGTWRVGGVLAMSRAFGNRFLKRFVVAEPEVQEQEIDDDLEFLILASDGLWDVVSNEHAVAFVKAEEGPEAAARKLAEIAFARGSTDNITCIVVKFLHAKMAVDAASSSERS.

Disordered stretches follow at residues 1–68 (MAAH…GKAA) and 80–99 (TTVA…EDDE). Residues 21–39 (PPAAEAEAAAAAAAIARAA) show a composition bias toward low complexity. Basic residues predominate over residues 51-63 (GVRHPLKHRRFRA). The span at 80–89 (TTVAEATATG) shows a compositional bias: low complexity. The 247-residue stretch at 115–361 (SCGYSSFRGR…DNITCIVVKF (247 aa)) folds into the PPM-type phosphatase domain. Asp-151, Gly-152, Asp-313, and Asp-352 together coordinate Mn(2+).

The protein belongs to the PP2C family. Mg(2+) is required as a cofactor. Mn(2+) serves as cofactor.

The catalysed reaction is O-phospho-L-seryl-[protein] + H2O = L-seryl-[protein] + phosphate. It catalyses the reaction O-phospho-L-threonyl-[protein] + H2O = L-threonyl-[protein] + phosphate. The protein is Probable protein phosphatase 2C 7 of Oryza sativa subsp. japonica (Rice).